A 247-amino-acid polypeptide reads, in one-letter code: 14-3-3 protein gamma (247 aa).

Met-1 is subject to N-acetylmethionine. An N-acetylvaline; in 14-3-3 protein gamma, N-terminally processed modification is found at Val-2. Positions 2–247 (VDREQLVQKA…QDDDGGEGNN (246 aa)) are interaction with SPATA18/MIEAP. Phosphoserine is present on Ser-71. Tyr-133 bears the Phosphotyrosine mark. Phosphothreonine is present on Thr-145. Ser-215 is modified (phosphoserine). Thr-234 carries the phosphothreonine modification. The residue at position 235 (Ser-235) is a Phosphoserine.

It belongs to the 14-3-3 family. As to quaternary structure, homodimer. Part of a complex that contains DSG3, PKP1, YAP1 and YWHAG; the complex is required for localization of DSG3 and YAP1 to the cell membrane in keratinocytes. Interacts with SAMSN1. Interacts with RAF1, SSH1 and CRTC2/TORC2. Interacts with ABL1 (phosphorylated form); the interaction retains it in the cytoplasm. Interacts with GAB2. Interacts with MDM4 (phosphorylated); negatively regulates MDM4 activity toward TP53. Interacts with PKA-phosphorylated AANAT and SIRT2. Interacts with the 'Thr-369' phosphorylated form of DAPK2. Interacts with PI4KB, TBC1D22A and TBC1D22B. Interacts with SLITRK1. Interacts with LRRK2; this interaction is dependent on LRRK2 phosphorylation. Interacts with MARK2 and MARK3. Interacts with MEFV. Interacts with ENDOG, TSC2 and PIK3C3; interaction with ENDOG weakens its interaction with TSC2 and PIK3C3. Interacts with (phosphorylated) WDR24. Interacts with BEST1; this interaction promotes L-glutamate channel activity leading to the positive regulation of NMDA glutamate receptor activity through the L-glutamate secretion. Interacts with PKP1 (when phosphorylated); the interaction results in translocation of PKP1 to the cytoplasm and loss of intercellular adhesion in keratinocytes. Interacts with SPATA18/MIEAP; a protein that also plays a role in MALM. Phosphorylated by various PKC isozymes.

It localises to the cytoplasm. Its subcellular location is the cytosol. It is found in the mitochondrion matrix. Functionally, adapter protein implicated in the regulation of a large spectrum of both general and specialized signaling pathways. Binds to a large number of partners, usually by recognition of a phosphoserine or phosphothreonine motif. Binding generally results in the modulation of the activity of the binding partner. Promotes inactivation of WDR24 component of the GATOR2 complex by binding to phosphorylated WDR24. Participates in the positive regulation of NMDA glutamate receptor activity by promoting the L-glutamate secretion through interaction with BEST1. Reduces keratinocyte intercellular adhesion, via interacting with PKP1 and sequestering it in the cytoplasm, thereby reducing its incorporation into desmosomes. Plays a role in mitochondrial protein catabolic process (also named MALM) that promotes the degradation of damaged proteins inside mitochondria. In Bos taurus (Bovine), this protein is 14-3-3 protein gamma.